Reading from the N-terminus, the 149-residue chain is Alpha-crystallin A chain (149 aa).

Positions 41-149 (LFRSVLESGI…DPSHSERPIP (109 aa)) constitute a sHSP domain. Residues His-89, Glu-91, His-96, and His-143 each contribute to the Zn(2+) site.

Belongs to the small heat shock protein (HSP20) family. Heteropolymer composed of three CRYAA and one CRYAB subunits. Inter-subunit bridging via zinc ions enhances stability, which is crucial as there is no protein turn over in the lens. Can also form homodimers and homotetramers (dimers of dimers) which serve as the building blocks of homooligomers. Within homooligomers, the zinc-binding motif is created from residues of 3 different molecules. His-89 and Glu-91 from one molecule are ligands of the zinc ion, and His-96 and His-143 residues from additional molecules complete the site with tetrahedral coordination geometry.

The protein resides in the cytoplasm. It localises to the nucleus. Contributes to the transparency and refractive index of the lens. May act as a chaperone, preventing aggregation of various proteins under a wide range of stress conditions. The sequence is that of Alpha-crystallin A chain (CRYAA) from Eudromia elegans (Elegant crested-tinamou).